The sequence spans 493 residues: Cytochrome c-552 (493 aa).

Residues 1-25 form the signal peptide; it reads MEKKLKSWQGWLLSGGSMVVVFVLG. His-116 is a binding site for heme c. Residues Cys-144, Cys-147, and Lys-148 each coordinate heme. Residues Cys-182, Cys-185, His-186, Cys-224, Cys-227, and His-228 each contribute to the heme c site. Ca(2+) contacts are provided by Glu-230, Tyr-231, Lys-276, and Gln-278. Tyr-231 lines the substrate pocket. Position 279 (His-279) interacts with substrate. Heme c contacts are provided by His-290, Cys-297, Cys-300, His-301, His-315, Cys-328, Cys-331, His-332, and His-407.

This sequence belongs to the cytochrome c-552 family. Ca(2+) serves as cofactor. The cofactor is heme c.

The protein resides in the periplasm. It carries out the reaction 6 Fe(III)-[cytochrome c] + NH4(+) + 2 H2O = 6 Fe(II)-[cytochrome c] + nitrite + 8 H(+). Its pathway is nitrogen metabolism; nitrate reduction (assimilation). In terms of biological role, catalyzes the reduction of nitrite to ammonia, consuming six electrons in the process. This is Cytochrome c-552 from Bacteroides thetaiotaomicron (strain ATCC 29148 / DSM 2079 / JCM 5827 / CCUG 10774 / NCTC 10582 / VPI-5482 / E50).